Consider the following 283-residue polypeptide: Protein/nucleic acid deglycase HchA (283 aa).

H86, E91, and H123 together coordinate Zn(2+). Catalysis depends on C185, which acts as the Nucleophile.

It belongs to the peptidase C56 family. HchA subfamily. In terms of assembly, homodimer.

Its subcellular location is the cytoplasm. The enzyme catalyses N(omega)-(1-hydroxy-2-oxopropyl)-L-arginyl-[protein] + H2O = lactate + L-arginyl-[protein] + H(+). It catalyses the reaction N(6)-(1-hydroxy-2-oxopropyl)-L-lysyl-[protein] + H2O = lactate + L-lysyl-[protein] + H(+). The catalysed reaction is S-(1-hydroxy-2-oxopropyl)-L-cysteinyl-[protein] + H2O = lactate + L-cysteinyl-[protein] + H(+). It carries out the reaction N(omega)-(1-hydroxy-2-oxoethyl)-L-arginyl-[protein] + H2O = L-arginyl-[protein] + glycolate + H(+). The enzyme catalyses N(6)-(1-hydroxy-2-oxoethyl)-L-lysyl-[protein] + H2O = glycolate + L-lysyl-[protein] + H(+). It catalyses the reaction S-(1-hydroxy-2-oxoethyl)-L-cysteinyl-[protein] + H2O = glycolate + L-cysteinyl-[protein] + H(+). The catalysed reaction is N(2)-(1-hydroxy-2-oxopropyl)-dGTP + H2O = lactate + dGTP + H(+). It carries out the reaction N(2)-(1-hydroxy-2-oxopropyl)-GTP + H2O = lactate + GTP + H(+). The enzyme catalyses N(2)-(1-hydroxy-2-oxopropyl)-GDP + H2O = lactate + GDP + H(+). It catalyses the reaction N(2)-(1-hydroxy-2-oxopropyl)-GMP + H2O = lactate + GMP + H(+). The catalysed reaction is N(2)-(1-hydroxy-2-oxoethyl)-dGTP + H2O = dGTP + glycolate + H(+). It carries out the reaction N(2)-(1-hydroxy-2-oxoethyl)-GTP + H2O = glycolate + GTP + H(+). The enzyme catalyses N(2)-(1-hydroxy-2-oxoethyl)-GDP + H2O = glycolate + GDP + H(+). It catalyses the reaction N(2)-(1-hydroxy-2-oxoethyl)-GMP + H2O = glycolate + GMP + H(+). The catalysed reaction is an N(2)-(1-hydroxy-2-oxopropyl)-guanosine in RNA + H2O = a guanosine in RNA + lactate + H(+). It carries out the reaction an N(2)-(1-hydroxy-2-oxopropyl)-2'-deoxyguanosine in DNA + H2O = a 2'-deoxyguanosine in DNA + lactate + H(+). The enzyme catalyses an N(2)-(1-hydroxy-2-oxoethyl)-guanosine in RNA + H2O = a guanosine in RNA + glycolate + H(+). It catalyses the reaction an N(2)-(1-hydroxy-2-oxoethyl)-2'-deoxyguanosine in DNA + H2O = a 2'-deoxyguanosine in DNA + glycolate + H(+). Protein and nucleotide deglycase that catalyzes the deglycation of the Maillard adducts formed between amino groups of proteins or nucleotides and reactive carbonyl groups of glyoxals. Thus, functions as a protein deglycase that repairs methylglyoxal- and glyoxal-glycated proteins, and releases repaired proteins and lactate or glycolate, respectively. Deglycates cysteine, arginine and lysine residues in proteins, and thus reactivates these proteins by reversing glycation by glyoxals. Acts on early glycation intermediates (hemithioacetals and aminocarbinols), preventing the formation of Schiff bases and advanced glycation endproducts (AGE). Also functions as a nucleotide deglycase able to repair glycated guanine in the free nucleotide pool (GTP, GDP, GMP, dGTP) and in DNA and RNA. Is thus involved in a major nucleotide repair system named guanine glycation repair (GG repair), dedicated to reversing methylglyoxal and glyoxal damage via nucleotide sanitization and direct nucleic acid repair. Plays an important role in protecting cells from carbonyl stress. In Escherichia coli (strain 55989 / EAEC), this protein is Protein/nucleic acid deglycase HchA.